The following is a 314-amino-acid chain: PDZ domain-containing protein GIPC2 (314 aa).

The span at 1–12 (MPLGLRGKKKAA) shows a compositional bias: basic residues. Residues 1–36 (MPLGLRGKKKAAKSKETARLVEGERSGGSQGVPGPP) form a disordered region. The segment covering 13 to 25 (KSKETARLVEGER) has biased composition (basic and acidic residues). The region spanning 117–197 (EVNVYKSEDS…EELFTLQLIE (81 aa)) is the PDZ domain.

It belongs to the GIPC family. Probably interacts with SEMA5A.

Its subcellular location is the cytoplasm. In Rattus norvegicus (Rat), this protein is PDZ domain-containing protein GIPC2 (Gipc2).